We begin with the raw amino-acid sequence, 113 residues long: MSEIKTEELACIYSGLLLQDDGIEITADKIKTLLEAANITVASHWPGLYARSLAKVNIPELLLNAGSSGAAGAAPVAAATSAAAPAAAAKKETKKEEVKKEESDDDMGMGLFD.

The segment at 84–113 is disordered; that stretch reads APAAAAKKETKKEEVKKEESDDDMGMGLFD. Residues 89–102 are compositionally biased toward basic and acidic residues; that stretch reads AKKETKKEEVKKEE.

This sequence belongs to the eukaryotic ribosomal protein P1/P2 family. As to quaternary structure, P1 and P2 exist as dimers at the large ribosomal subunit.

Its function is as follows. Plays an important role in the elongation step of protein synthesis. The polypeptide is Large ribosomal subunit protein P1 (rplp1) (Dictyostelium discoideum (Social amoeba)).